The following is a 90-amino-acid chain: DNA-directed RNA polymerase subunit omega (90 aa).

The disordered stretch occupies residues 69 to 90 (RQEQQEQDAAELAAVSSITHNR).

The protein belongs to the RNA polymerase subunit omega family. As to quaternary structure, the RNAP catalytic core consists of 2 alpha, 1 beta, 1 beta' and 1 omega subunit. When a sigma factor is associated with the core the holoenzyme is formed, which can initiate transcription.

It carries out the reaction RNA(n) + a ribonucleoside 5'-triphosphate = RNA(n+1) + diphosphate. In terms of biological role, promotes RNA polymerase assembly. Latches the N- and C-terminal regions of the beta' subunit thereby facilitating its interaction with the beta and alpha subunits. The protein is DNA-directed RNA polymerase subunit omega of Aliivibrio salmonicida (strain LFI1238) (Vibrio salmonicida (strain LFI1238)).